Reading from the N-terminus, the 129-residue chain is Gas vesicle protein C (129 aa).

3 consecutive repeats follow at residues 19-51 (VTQL…LHQF), 52-84 (HQNL…LHKF), and 85-117 (HQNL…LQQF). The segment at 19 to 117 (VTQLFRETHE…KAQSQYLQQF (99 aa)) is 3 X 33 AA tandem repeats.

Belongs to the gas vesicle GvpC family.

The protein localises to the gas vesicle. Its function is as follows. Confers stability, involved in shaping gas vesicles, hollow, gas filled proteinaceous nanostructures. During planktonic growth they allow positioning of the organism at a favorable depth for light or nutrient acquisition. Cluster expression in E.coli (gvpA1-gvpA2-gvpC-gvpN-gvpJ-gvpK-gvpF-gvpG-gvpV-gvpW) allows cells to float and produces irregularly shaped gas vesicles. This chain is Gas vesicle protein C, found in Nostoc sp. (strain PCC 7120 / SAG 25.82 / UTEX 2576).